The primary structure comprises 158 residues: 2-C-methyl-D-erythritol 2,4-cyclodiphosphate synthase (158 aa).

A divalent metal cation-binding residues include Asp9 and His11. 4-CDP-2-C-methyl-D-erythritol 2-phosphate contacts are provided by residues Asp9 to His11 and His35 to Ser36. His43 contacts a divalent metal cation. 4-CDP-2-C-methyl-D-erythritol 2-phosphate-binding positions include Asp57–Gly59, Phe62–Asp66, Ala101–Ala107, Thr133–Glu136, Phe140, and Arg143.

Belongs to the IspF family. As to quaternary structure, homotrimer. A divalent metal cation serves as cofactor.

The enzyme catalyses 4-CDP-2-C-methyl-D-erythritol 2-phosphate = 2-C-methyl-D-erythritol 2,4-cyclic diphosphate + CMP. The protein operates within isoprenoid biosynthesis; isopentenyl diphosphate biosynthesis via DXP pathway; isopentenyl diphosphate from 1-deoxy-D-xylulose 5-phosphate: step 4/6. Functionally, involved in the biosynthesis of isopentenyl diphosphate (IPP) and dimethylallyl diphosphate (DMAPP), two major building blocks of isoprenoid compounds. Catalyzes the conversion of 4-diphosphocytidyl-2-C-methyl-D-erythritol 2-phosphate (CDP-ME2P) to 2-C-methyl-D-erythritol 2,4-cyclodiphosphate (ME-CPP) with a corresponding release of cytidine 5-monophosphate (CMP). The chain is 2-C-methyl-D-erythritol 2,4-cyclodiphosphate synthase from Bacillus thuringiensis subsp. konkukian (strain 97-27).